The primary structure comprises 502 residues: Pyruvate kinase (502 aa).

Arginine 54 lines the substrate pocket. Residues asparagine 56, serine 58, aspartate 88, and threonine 89 each contribute to the K(+) site. ATP is bound at residue 56 to 59 (NFSH). The ATP site is built by arginine 95 and lysine 184. A Mg(2+)-binding site is contributed by glutamate 252. The substrate site is built by glycine 275, aspartate 276, and threonine 308. Aspartate 276 serves as a coordination point for Mg(2+).

The protein belongs to the pyruvate kinase family. Homotetramer. It depends on Mg(2+) as a cofactor. Requires K(+) as cofactor.

The enzyme catalyses pyruvate + ATP = phosphoenolpyruvate + ADP + H(+). It participates in carbohydrate degradation; glycolysis; pyruvate from D-glyceraldehyde 3-phosphate: step 5/5. With respect to regulation, regulated by phosphoenolpyruvate substrate and is allosterically activated by ribose-5-phosphate, AMP and other nucleoside monophosphates but not by fructose-1,6-bisphosphate. The chain is Pyruvate kinase (pyk) from Lactococcus lactis subsp. lactis (strain IL1403) (Streptococcus lactis).